The chain runs to 113 residues: T cell receptor alpha variable 8-1 (113 aa).

Positions 1–20 (MLLLLIPVLGMIFALRDARA) are cleaved as a signal peptide. An Ig-like domain is found at 21–113 (QSVSQHNHHV…DTAEYFCAVN (93 aa)). The cysteines at positions 42 and 110 are disulfide-linked. An N-linked (GlcNAc...) asparagine glycan is attached at Asn43.

In terms of assembly, alpha-beta TR is a heterodimer composed of an alpha and beta chain; disulfide-linked. The alpha-beta TR is associated with the transmembrane signaling CD3 coreceptor proteins to form the TR-CD3 (TcR or TCR). The assembly of alpha-beta TR heterodimers with CD3 occurs in the endoplasmic reticulum where a single alpha-beta TR heterodimer associates with one CD3D-CD3E heterodimer, one CD3G-CD3E heterodimer and one CD247 homodimer forming a stable octameric structure. CD3D-CD3E and CD3G-CD3E heterodimers preferentially associate with TR alpha and TR beta chains, respectively. The association of the CD247 homodimer is the last step of TcR assembly in the endoplasmic reticulum and is required for transport to the cell surface.

It is found in the cell membrane. In terms of biological role, v region of the variable domain of T cell receptor (TR) alpha chain that participates in the antigen recognition. Alpha-beta T cell receptors are antigen specific receptors which are essential to the immune response and are present on the cell surface of T lymphocytes. Recognize peptide-major histocompatibility (MH) (pMH) complexes that are displayed by antigen presenting cells (APC), a prerequisite for efficient T cell adaptive immunity against pathogens. Binding of alpha-beta TR to pMH complex initiates TR-CD3 clustering on the cell surface and intracellular activation of LCK that phosphorylates the ITAM motifs of CD3G, CD3D, CD3E and CD247 enabling the recruitment of ZAP70. In turn ZAP70 phosphorylates LAT, which recruits numerous signaling molecules to form the LAT signalosome. The LAT signalosome propagates signal branching to three major signaling pathways, the calcium, the mitogen-activated protein kinase (MAPK) kinase and the nuclear factor NF-kappa-B (NF-kB) pathways, leading to the mobilization of transcription factors that are critical for gene expression and essential for T cell growth and differentiation. The T cell repertoire is generated in the thymus, by V-(D)-J rearrangement. This repertoire is then shaped by intrathymic selection events to generate a peripheral T cell pool of self-MH restricted, non-autoaggressive T cells. Post-thymic interaction of alpha-beta TR with the pMH complexes shapes TR structural and functional avidity. The protein is T cell receptor alpha variable 8-1 of Homo sapiens (Human).